Reading from the N-terminus, the 287-residue chain is uncharacterized protein (287 aa).

10 consecutive transmembrane segments (helical) span residues 4–24 (TTNGWINGFIGVLIFSGSLPA), 36–56 (FLTVCRAAIAGVLAGGLLLIF), 66–86 (LISLLVVAFGVVIGFPLLTAL), 93–113 (SAHAIVFIGLLPLATAVFGVL), 122–142 (VFWIFSAAGSLLVAGFALIQG), 148–168 (LGDAYMLASIVVCGLGYAEGA), 179–199 (VISWALVLSLPLMLPLSFFFT), 208–228 (VPALLSLAYVSLFSMLIGFVF), 237–259 (GIAAVGQLQLLQPFFGLLLASVI), and 264–286 (VGWALVAVNIAVIMCVAAARRFA). EamA domains lie at 16–139 (LIFS…GFAL) and 158–284 (VVCG…AARR).

The protein belongs to the EamA transporter family.

Its subcellular location is the cell membrane. This is an uncharacterized protein from Bacillus subtilis (strain 168).